The chain runs to 360 residues: MTATLERRSSQGLWDRFADWVTSTNNRFYVGWFGVLMIPTLLSATICFVVAFVAAPPVDMDGIREPISGSLLYGNNIITGAVIPSSNAIGLHFYPIWEAASMDEWLYNGGPYQLVVFHFLIGVFCYLGREWELSYRLGLRPWICIAYSAPVAAAAAVFLIYPIGQGSFSDGMPLGISGTFNFMFVFQAEHNILNHPFHMLGVAGVFGGSLFSAMHGSLVTSSLIRETSMEESQNYGYKFGQEEETYNIIAAHGYFGRLIFQYASFNNSRSLHFFLAAWPVIGIWFTALGISVMAFNLNGFNFNSSIVDSQGRAIYTWADIVNRANLGMEVMHERNAHNFPLDLAGTESAPVAVGNADLNG.

Transmembrane regions (helical) follow at residues 29–46 (YVGW…SATI), 118–133 (HFLI…EWEL), and 142–156 (WICI…AAAA). Residue His118 coordinates chlorophyll a. A pheophytin a-binding site is contributed by Tyr126. Positions 170 and 189 each coordinate [CaMn4O5] cluster. The helical transmembrane segment at 197 to 218 (FHMLGVAGVFGGSLFSAMHGSL) threads the bilayer. His198 provides a ligand contact to chlorophyll a. Residues His215 and 264-265 (SF) each bind a quinone. Residue His215 participates in Fe cation binding. His272 lines the Fe cation pocket. Residues 274–288 (FLAAWPVIGIWFTAL) form a helical membrane-spanning segment. [CaMn4O5] cluster is bound by residues His332, Glu333, Asp342, and Ala344. Positions 345–360 (GTESAPVAVGNADLNG) are excised as a propeptide.

This sequence belongs to the reaction center PufL/M/PsbA/D family. In terms of assembly, PSII is composed of 1 copy each of membrane proteins PsbA, PsbB, PsbC, PsbD, PsbE, PsbF, PsbH, PsbI, PsbJ, PsbK, PsbL, PsbM, PsbT, PsbX, Psb30/Ycf12, peripheral proteins PsbO, CyanoQ (PsbQ), PsbU, PsbV and a large number of cofactors. It forms dimeric complexes. The cofactor is The D1/D2 heterodimer binds P680, chlorophylls that are the primary electron donor of PSII, and subsequent electron acceptors. It shares a non-heme iron and each subunit binds pheophytin, quinone, additional chlorophylls, carotenoids and lipids. D1 provides most of the ligands for the Mn4-Ca-O5 cluster of the oxygen-evolving complex (OEC). There is also a Cl(-1) ion associated with D1 and D2, which is required for oxygen evolution. The PSII complex binds additional chlorophylls, carotenoids and specific lipids.. Post-translationally, tyr-161 forms a radical intermediate that is referred to as redox-active TyrZ, YZ or Y-Z. C-terminally processed by CtpA; processing is essential to allow assembly of the oxygen-evolving complex and thus photosynthetic growth.

The protein resides in the cell inner membrane. The catalysed reaction is 2 a plastoquinone + 4 hnu + 2 H2O = 2 a plastoquinol + O2. Photosystem II (PSII) is a light-driven water:plastoquinone oxidoreductase that uses light energy to abstract electrons from H(2)O, generating O(2) and a proton gradient subsequently used for ATP formation. It consists of a core antenna complex that captures photons, and an electron transfer chain that converts photonic excitation into a charge separation. The D1/D2 (PsbA/PsbD) reaction center heterodimer binds P680, the primary electron donor of PSII as well as several subsequent electron acceptors. The protein is Photosystem II protein D1 1 of Gloeobacter violaceus (strain ATCC 29082 / PCC 7421).